Here is a 156-residue protein sequence, read N- to C-terminus: ATP synthase subunit b (156 aa).

Residues 11–31 form a helical membrane-spanning segment; it reads AIAFVLFVIFCMKYVWPPIMA.

Belongs to the ATPase B chain family. In terms of assembly, F-type ATPases have 2 components, F(1) - the catalytic core - and F(0) - the membrane proton channel. F(1) has five subunits: alpha(3), beta(3), gamma(1), delta(1), epsilon(1). F(0) has three main subunits: a(1), b(2) and c(10-14). The alpha and beta chains form an alternating ring which encloses part of the gamma chain. F(1) is attached to F(0) by a central stalk formed by the gamma and epsilon chains, while a peripheral stalk is formed by the delta and b chains.

The protein localises to the cell inner membrane. Its function is as follows. F(1)F(0) ATP synthase produces ATP from ADP in the presence of a proton or sodium gradient. F-type ATPases consist of two structural domains, F(1) containing the extramembraneous catalytic core and F(0) containing the membrane proton channel, linked together by a central stalk and a peripheral stalk. During catalysis, ATP synthesis in the catalytic domain of F(1) is coupled via a rotary mechanism of the central stalk subunits to proton translocation. In terms of biological role, component of the F(0) channel, it forms part of the peripheral stalk, linking F(1) to F(0). This chain is ATP synthase subunit b, found in Yersinia pseudotuberculosis serotype O:1b (strain IP 31758).